The primary structure comprises 255 residues: 1-(5-phosphoribosyl)-5-[(5-phosphoribosylamino)methylideneamino] imidazole-4-carboxamide isomerase (255 aa).

Aspartate 8 acts as the Proton acceptor in catalysis. Aspartate 129 acts as the Proton donor in catalysis.

Belongs to the HisA/HisF family.

The protein resides in the cytoplasm. It catalyses the reaction 1-(5-phospho-beta-D-ribosyl)-5-[(5-phospho-beta-D-ribosylamino)methylideneamino]imidazole-4-carboxamide = 5-[(5-phospho-1-deoxy-D-ribulos-1-ylimino)methylamino]-1-(5-phospho-beta-D-ribosyl)imidazole-4-carboxamide. Its pathway is amino-acid biosynthesis; L-histidine biosynthesis; L-histidine from 5-phospho-alpha-D-ribose 1-diphosphate: step 4/9. This is 1-(5-phosphoribosyl)-5-[(5-phosphoribosylamino)methylideneamino] imidazole-4-carboxamide isomerase from Prochlorococcus marinus (strain MIT 9313).